The chain runs to 360 residues: Capsular polysaccharide phosphotransferase LcbA (360 aa).

It belongs to the stealth family.

Functionally, part of a group II capsule biosynthesis locus. In Aeromonas hydrophila, this protein is Capsular polysaccharide phosphotransferase LcbA (lcbA).